A 644-amino-acid polypeptide reads, in one-letter code: Threonine--tRNA ligase (644 aa).

Residues 1-61 (MKVSIEGSVV…TACETLEPVY (61 aa)) enclose the TGS domain. The segment at 241–532 (DHRKLGTQLD…LTEHFAGAFP (292 aa)) is catalytic. Zn(2+) contacts are provided by Cys-333, His-384, and His-509.

The protein belongs to the class-II aminoacyl-tRNA synthetase family. In terms of assembly, homodimer. The cofactor is Zn(2+).

It is found in the cytoplasm. The enzyme catalyses tRNA(Thr) + L-threonine + ATP = L-threonyl-tRNA(Thr) + AMP + diphosphate + H(+). In terms of biological role, catalyzes the attachment of threonine to tRNA(Thr) in a two-step reaction: L-threonine is first activated by ATP to form Thr-AMP and then transferred to the acceptor end of tRNA(Thr). Also edits incorrectly charged L-seryl-tRNA(Thr). The sequence is that of Threonine--tRNA ligase from Oleidesulfovibrio alaskensis (strain ATCC BAA-1058 / DSM 17464 / G20) (Desulfovibrio alaskensis).